The following is a 1067-amino-acid chain: MTDQENNNNISSNPFAALFGSLADAKQFAAIQKEQLKQQSDELPASPDDSDNSVSESLDEFDYSVAEISRSFRSQQEICEQLNINHMIQRIFLITLDNSDPSLKSGNGIPSRCVYLEEMAVDLEDQDWLDMNNVEQAVFTRLLLQDPGNHLINMTSSTTLNLSADRDAGEKHIFCYLYSCFQRAKEEITKVPENLLPFAVQCRNLTVSNTRTVLLTPEIYVDQNIHEQLVDLMVEAILGGHFESVAEFLDEVIEALILDEEVRTFPEVMIPVFDILSSRIKDLELCQILLYAYLDILLYFTKQKDMAKVFVDYIQPKDPSNGQMYQKTLLGVILNISCLLKTPGVIENHGYFLNPSRSSPQEIKVQEANIHQFMARYHEKIYQMLKNLLQLSPETKHCILSWLGNCLHANAGRTKIWANQMPEIFFQMYASDAFFLNLGAALLKLCQPFCKPRSSRLLTFNPTYCALKELNDEERKIKNVHMRGLDKETCLIPAVQEPKFPQNYNLVTENLVLTEYTLYLGFHRLHDQMVKINQNLHRLQVAWRDAQQSSSPAADNLREQFERLMTVYLSTKTAMTEPQMLQNCLNLQVSMAVLLVQLAIGNEGSQLMELTFPLPDGYSSLAYVPEFFADNLGDFLIFLRRFADDILETSADSLEHVLHFITIFTGSIERMKNPHLRAKLAEVLEAVMPHMDQTPNPLVSSVFHRKRVFCNFPYASHLAEALIKVFVDIEFTGDPHQFEQKFNYRRPMYPILKYMWGTDTYRESIKDLADYASKNLEAMNPPLFLRFLNLLMNDAIFLLDEAIQYLSKIKIQQIEKDRGEWDNLTPEARREKEAGLQMFGQLARFHNIMSNETIGTLAFLTSEIKSLFVHPFLAERIISMLNYFLQHLVGPKMGALKVKDFSEFDFKPQQLVSDICTIYLNLGDEENFCATVPKDGRSYSPTLFAQTVRVLKKINKPGNMIVAFSNLAERIKSLADLQQQEEETYADACDEFLDPIMSTLMSDPVVLPSSRVTVDRSTIARHLLSDQTDPFNRSPLTMDQIRPNTELKEKIQRWLAERKQQQKEQLE.

A disordered region spans residues 33–57 (KEQLKQQSDELPASPDDSDNSVSES). Lysine 386 carries the N6-acetyllysine modification. The 75-residue stretch at 987-1061 (DACDEFLDPI…QRWLAERKQQ (75 aa)) folds into the U-box domain.

The protein belongs to the ubiquitin conjugation factor E4 family.

The protein localises to the cytoplasm. It carries out the reaction S-ubiquitinyl-[E2 ubiquitin-conjugating enzyme]-L-cysteine + [acceptor protein]-L-lysine = [E2 ubiquitin-conjugating enzyme]-L-cysteine + N(6)-ubiquitinyl-[acceptor protein]-L-lysine.. Its pathway is protein modification; protein ubiquitination. Ubiquitin-protein ligase that probably functions as an E3 ligase in conjunction with specific E1 and E2 ligases. May also function as an E4 ligase mediating the assembly of polyubiquitin chains on substrates ubiquitinated by another E3 ubiquitin ligase. Mediates 'Lys-48'-linked polyubiquitination of substrates. The sequence is that of Ubiquitin conjugation factor E4 A from Bos taurus (Bovine).